The sequence spans 421 residues: Succinate--CoA ligase [ADP-forming] subunit beta, mitochondrial (421 aa).

Residues 1-26 (MRGLVNKLVSRSLSISGKWQNQQLRR) constitute a mitochondrion transit peptide. Positions 35–278 (AELMGKYGVN…PTQEDPREVA (244 aa)) constitute an ATP-grasp domain. ATP-binding positions include Lys-74, 81–83 (GRG), and Glu-141. Mg(2+) contacts are provided by Asn-233 and Asp-247. Substrate contacts are provided by residues Asn-298 and 355–357 (GIM).

It belongs to the succinate/malate CoA ligase beta subunit family. As to quaternary structure, heterodimer of an alpha and a beta subunit. Mg(2+) is required as a cofactor.

Its subcellular location is the mitochondrion. The enzyme catalyses succinate + ATP + CoA = succinyl-CoA + ADP + phosphate. Its pathway is carbohydrate metabolism; tricarboxylic acid cycle; succinate from succinyl-CoA (ligase route): step 1/1. In terms of biological role, succinyl-CoA synthetase functions in the citric acid cycle (TCA), coupling the hydrolysis of succinyl-CoA to the synthesis of ATP and thus represents the only step of substrate-level phosphorylation in the TCA. The beta subunit provides nucleotide specificity of the enzyme and binds the substrate succinate, while the binding sites for coenzyme A and phosphate are found in the alpha subunit. The protein is Succinate--CoA ligase [ADP-forming] subunit beta, mitochondrial of Arabidopsis thaliana (Mouse-ear cress).